Here is a 121-residue protein sequence, read N- to C-terminus: Piercer of microtubule wall 2 protein (121 aa).

A compositionally biased stretch (basic and acidic residues) spans 1-10; sequence MTDRNRDKKS. The disordered stretch occupies residues 1 to 29; that stretch reads MTDRNRDKKSTSPSNSDTEMKSEQLPPCV.

It belongs to the PIERCE2 family. Microtubule inner protein component of sperm flagellar doublet microtubules. Interacts with CFAP53, ODAD1 and ODAD3; the interactions link the outer dynein arms docking complex (ODA-DC) to the internal microtubule inner proteins (MIP) in cilium axoneme. As to expression, expressed in airway epithelial cells.

The protein resides in the cytoplasm. It localises to the cytoskeleton. Its subcellular location is the cilium axoneme. The protein localises to the flagellum axoneme. Microtubule inner protein involved in the attachment of outer dynein arms (ODAs) to dynein-decorated doublet microtubules (DMTs) in cilia axoneme, which is required for motile cilia beating. This Homo sapiens (Human) protein is Piercer of microtubule wall 2 protein.